Reading from the N-terminus, the 188-residue chain is Adenine phosphoribosyltransferase (188 aa).

The protein belongs to the purine/pyrimidine phosphoribosyltransferase family. As to quaternary structure, homodimer.

Its subcellular location is the cytoplasm. The enzyme catalyses AMP + diphosphate = 5-phospho-alpha-D-ribose 1-diphosphate + adenine. It participates in purine metabolism; AMP biosynthesis via salvage pathway; AMP from adenine: step 1/1. Functionally, catalyzes a salvage reaction resulting in the formation of AMP, that is energically less costly than de novo synthesis. This chain is Adenine phosphoribosyltransferase, found in Frankia casuarinae (strain DSM 45818 / CECT 9043 / HFP020203 / CcI3).